A 549-amino-acid chain; its full sequence is Cytoplasmic trehalase (549 aa).

Substrate is bound by residues Arg-168, Trp-175 to Asp-176, Asn-212, Arg-221 to Gln-223, Arg-292 to Glu-294, and Gly-324. Active-site proton donor/acceptor residues include Asp-326 and Glu-509. Glu-525 provides a ligand contact to substrate.

The protein belongs to the glycosyl hydrolase 37 family. Monomer.

It is found in the cytoplasm. It catalyses the reaction alpha,alpha-trehalose + H2O = alpha-D-glucose + beta-D-glucose. It functions in the pathway glycan degradation; trehalose degradation; D-glucose from alpha,alpha-trehalose: step 1/1. Its function is as follows. Hydrolyzes trehalose to glucose. Could be involved, in cells returning to low osmolarity conditions, in the utilization of the accumulated cytoplasmic trehalose, which was synthesized in response to high osmolarity. The polypeptide is Cytoplasmic trehalase (Shigella flexneri serotype 5b (strain 8401)).